An 863-amino-acid polypeptide reads, in one-letter code: Bifunctional uridylyltransferase/uridylyl-removing enzyme (863 aa).

A uridylyltransferase region spans residues 1–328 (MLFSPTLSSP…PSNQDTVIDQ (328 aa)). Residues 329-687 (LDDDFQLINQ…ISNRFSLGGT (359 aa)) are uridylyl-removing. Positions 446–568 (VDEHTLRVML…VQNQVRLDYL (123 aa)) constitute an HD domain. 2 consecutive ACT domains span residues 688-772 (EVFI…PNRQ) and 794-863 (QMEL…RNIG).

Belongs to the GlnD family. It depends on Mg(2+) as a cofactor.

The enzyme catalyses [protein-PII]-L-tyrosine + UTP = [protein-PII]-uridylyl-L-tyrosine + diphosphate. It catalyses the reaction [protein-PII]-uridylyl-L-tyrosine + H2O = [protein-PII]-L-tyrosine + UMP + H(+). Uridylyltransferase (UTase) activity is inhibited by glutamine, while glutamine activates uridylyl-removing (UR) activity. In terms of biological role, modifies, by uridylylation and deuridylylation, the PII regulatory proteins (GlnB and homologs), in response to the nitrogen status of the cell that GlnD senses through the glutamine level. Under low glutamine levels, catalyzes the conversion of the PII proteins and UTP to PII-UMP and PPi, while under higher glutamine levels, GlnD hydrolyzes PII-UMP to PII and UMP (deuridylylation). Thus, controls uridylylation state and activity of the PII proteins, and plays an important role in the regulation of nitrogen assimilation and metabolism. This Haemophilus influenzae (strain 86-028NP) protein is Bifunctional uridylyltransferase/uridylyl-removing enzyme.